The chain runs to 448 residues: Methionine aminopeptidase 2 (448 aa).

The span at 1-17 shows a compositional bias: low complexity; it reads MPATAEAADAATQATDA. The interval 1–87 is disordered; sequence MPATAEAADA…QTEPPSIGLT (87 aa). A compositionally biased stretch (basic and acidic residues) spans 21 to 34; it reads KLEENKLPEGQERG. Residues 35-46 are compositionally biased toward acidic residues; sequence PEEEEDDDDDET. Positions 55–71 are enriched in basic residues; that stretch reads KKKKKKKSGAKKKKSKT. Substrate is bound at residue His-200. Asp-220, Asp-231, and His-300 together coordinate a divalent metal cation. His-308 lines the substrate pocket. A divalent metal cation contacts are provided by Glu-334 and Glu-429.

Belongs to the peptidase M24A family. Methionine aminopeptidase eukaryotic type 2 subfamily. Co(2+) is required as a cofactor. Zn(2+) serves as cofactor. It depends on Mn(2+) as a cofactor. Requires Fe(2+) as cofactor.

It is found in the cytoplasm. It catalyses the reaction Release of N-terminal amino acids, preferentially methionine, from peptides and arylamides.. Its function is as follows. Cotranslationally removes the N-terminal methionine from nascent proteins. The N-terminal methionine is often cleaved when the second residue in the primary sequence is small and uncharged (Met-Ala-, Cys, Gly, Pro, Ser, Thr, or Val). The protein is Methionine aminopeptidase 2 of Malassezia globosa (strain ATCC MYA-4612 / CBS 7966) (Dandruff-associated fungus).